The chain runs to 98 residues: NADH-ubiquinone oxidoreductase chain 4L (98 aa).

The next 3 helical transmembrane spans lie at 1–21, 29–49, and 58–78; these read MTPV…GLAF, ALLC…LWAL, and VAPM…LALL.

The protein belongs to the complex I subunit 4L family.

It is found in the mitochondrion membrane. It carries out the reaction a ubiquinone + NADH + 5 H(+)(in) = a ubiquinol + NAD(+) + 4 H(+)(out). Functionally, core subunit of the mitochondrial membrane respiratory chain NADH dehydrogenase (Complex I) which catalyzes electron transfer from NADH through the respiratory chain, using ubiquinone as an electron acceptor. Part of the enzyme membrane arm which is embedded in the lipid bilayer and involved in proton translocation. The protein is NADH-ubiquinone oxidoreductase chain 4L (MT-ND4L) of Salmo salar (Atlantic salmon).